Here is a 164-residue protein sequence, read N- to C-terminus: UPF0303 protein RHE_CH02903 (164 aa).

This sequence belongs to the UPF0303 family.

The polypeptide is UPF0303 protein RHE_CH02903 (Rhizobium etli (strain ATCC 51251 / DSM 11541 / JCM 21823 / NBRC 15573 / CFN 42)).